The sequence spans 206 residues: Large ribosomal subunit protein uL4 (206 aa).

The segment at Gly-46–Thr-77 is disordered. Over residues His-58–Gly-70 the composition is skewed to basic residues.

The protein belongs to the universal ribosomal protein uL4 family. Part of the 50S ribosomal subunit.

One of the primary rRNA binding proteins, this protein initially binds near the 5'-end of the 23S rRNA. It is important during the early stages of 50S assembly. It makes multiple contacts with different domains of the 23S rRNA in the assembled 50S subunit and ribosome. Its function is as follows. Forms part of the polypeptide exit tunnel. This is Large ribosomal subunit protein uL4 from Albidiferax ferrireducens (strain ATCC BAA-621 / DSM 15236 / T118) (Rhodoferax ferrireducens).